Here is a 210-residue protein sequence, read N- to C-terminus: Kalata-B2 (210 aa).

Positions 1–22 are cleaved as a signal peptide; the sequence is MAKFTNCLVLSLLLAAFVGAFG. The propeptide occupies 23-66; sequence AEFSEADKATLVNDIAENIQKEILGEVKTSETVLTMFLKEMQLK. Residues 67–95 constitute a cross-link (cyclopeptide (Gly-Asp)); that stretch reads GLPVCGETCFGGTCNTPGCSCTWPICTRD. Disulfide bonds link C71–C85, C75–C87, and C80–C92. The propeptide occupies 96-120; sequence SLPMRAGGKTSETTLHMFLKEMQLK. Residues 121–149 constitute a cross-link (cyclopeptide (Gly-Asp)); the sequence is GLPVCGETCFGGTCNTPGCSCTWPICTRD. 3 disulfide bridges follow: C125/C139, C129/C141, and C134/C146. A propeptide spanning residues 150-174 is cleaved from the precursor; it reads SLPMSAGGKTSETTLHMFLKEMQLK. The cyclopeptide (Gly-Asp) cross-link spans 175–203; that stretch reads GLPVCGETCFGGTCNTPGCSCTWPICTRD. 3 disulfide bridges follow: C179-C193, C183-C195, and C188-C200. Positions 204–210 are excised as a propeptide; sequence SLPLVAA.

The protein belongs to the cyclotide family. Moebius subfamily. In terms of processing, kalata-B2 is a cyclic peptide which occurs in three forms: with unmodified Trp, with Trp oxidized to form N-formylkynurenine and with Trp oxidized to form kynurenine. Oxidation is enhanced by exposure to sunlight.

Functionally, probably participates in a plant defense mechanism. Inhibitory effect on the growth and development of larvae from Helicoverpa punctigera. Has hemolytic activity. This Oldenlandia affinis protein is Kalata-B2 (OAK4).